A 1167-amino-acid chain; its full sequence is Topoisomerase 1-associated factor 1 (1167 aa).

Disordered stretches follow at residues 332–353 (SKRW…NNDF), 563–594 (SRRR…DYAE), 889–969 (KYSH…LENT), 981–1093 (YVHA…DAID), and 1105–1167 (FDDD…SDSE). Positions 572-582 (REEQLVNKGSD) are enriched in basic and acidic residues. Acidic residues-rich tracts occupy residues 583–593 (EEQESEDEDYA) and 949–958 (EEEPVDEETL). Composition is skewed to basic and acidic residues over residues 959–969 (EERRQARLENT) and 996–1013 (EFFR…ERIK). Residues 1062–1074 (ELEEDDILMDDME) are compositionally biased toward acidic residues. The segment covering 1078-1088 (RASSGEYSSND) has biased composition (polar residues). Residues 1110 to 1127 (AFGRDRDKDETSVDRDGA) are compositionally biased toward basic and acidic residues.

This sequence belongs to the timeless family.

The protein localises to the nucleus. Its function is as follows. Involved in chromosome segregation during meiosis and DNA damage repair. This is Topoisomerase 1-associated factor 1 (tof1) from Emericella nidulans (strain FGSC A4 / ATCC 38163 / CBS 112.46 / NRRL 194 / M139) (Aspergillus nidulans).